The primary structure comprises 89 residues: MSITVERKKALISEYADLEKNTGSVEVQCAILTERIINLTQHCKINFKDFHSKRGLLMLVSSRRKLLSYLKKKDLNRYTQLINRLGLRK.

Belongs to the universal ribosomal protein uS15 family. As to quaternary structure, part of the 30S ribosomal subunit. Forms a bridge to the 50S subunit in the 70S ribosome, contacting the 23S rRNA.

In terms of biological role, one of the primary rRNA binding proteins, it binds directly to 16S rRNA where it helps nucleate assembly of the platform of the 30S subunit by binding and bridging several RNA helices of the 16S rRNA. Forms an intersubunit bridge (bridge B4) with the 23S rRNA of the 50S subunit in the ribosome. This chain is Small ribosomal subunit protein uS15, found in Orientia tsutsugamushi (strain Ikeda) (Rickettsia tsutsugamushi).